A 357-amino-acid chain; its full sequence is Aminomethyltransferase (357 aa).

The protein belongs to the GcvT family. In terms of assembly, the glycine cleavage system is composed of four proteins: P, T, L and H.

It carries out the reaction N(6)-[(R)-S(8)-aminomethyldihydrolipoyl]-L-lysyl-[protein] + (6S)-5,6,7,8-tetrahydrofolate = N(6)-[(R)-dihydrolipoyl]-L-lysyl-[protein] + (6R)-5,10-methylene-5,6,7,8-tetrahydrofolate + NH4(+). Functionally, the glycine cleavage system catalyzes the degradation of glycine. This Halothermothrix orenii (strain H 168 / OCM 544 / DSM 9562) protein is Aminomethyltransferase.